The following is a 1170-amino-acid chain: Glucose transport transcription regulator RGT1 (1170 aa).

Positions 1-22 (MNELNTVSTNSSDSTKNGGTSN) are enriched in polar residues. The tract at residues 1-46 (MNELNTVSTNSSDSTKNGGTSNSPDDMDSAAAASHAIKKRTKASRA) is disordered. The zn(2)-C6 fungal-type DNA-binding region spans 47–76 (CDQCRKKKIKCDYKDEKGVCSNCQRNGDRC). Residues 77–149 (SFDRVPLKRG…PSTPSRSNSV (73 aa)) are disordered. Positions 99–108 (RTNEIQDHNN) are enriched in basic and acidic residues. A compositionally biased stretch (low complexity) spans 113–138 (NTFDNSNNTLNNNTGNSGDNGINSNT). Residues 139–149 (VPSTPSRSNSV) show a composition bias toward polar residues. A phosphoserine mark is found at Ser-202, Ser-205, Ser-208, and Ser-229. Disordered regions lie at residues 226–254 (VQQS…SASG), 269–288 (APTD…IPSL), 293–323 (SNSL…LQQG), 384–506 (AQQT…HPMT), and 944–977 (NYRP…SAAP). The span at 239–250 (SGNANGSVTGSG) shows a compositional bias: low complexity. A compositionally biased stretch (basic and acidic residues) spans 271 to 280 (TDDHNGEQTR). 2 positions are modified to phosphoserine: Ser-283 and Ser-284. Composition is skewed to low complexity over residues 293–302 (SNSLLLGGQP), 309–323 (QQSQ…LQQG), and 385–397 (QQTQ…QVPQ). Ser-410 and Ser-414 each carry phosphoserine. Residues 411-422 (APVSVTLSTDRL) are compositionally biased toward polar residues. The span at 424–444 (GNENNNGEINNNNGSNNSGSS) shows a compositional bias: low complexity. Polar residues predominate over residues 445–457 (KDTSQHSQESVTT). Residues 473 to 488 (STKKRRKSYVSKKTKP) show a composition bias toward basic residues. Residues 493–506 (SISITSKDSAHPMT) show a composition bias toward polar residues. Residue Ser-1130 is modified to Phosphoserine.

Belongs to the EDS1/RGT1 family. Glucose-induced phosphorylation regulates the DNA-binding activity. Hyperphosphorylation in cells growing on high levels of glucose does prevents DNA-binding and dephosphorylation restores DNA-binding ability.

The protein resides in the nucleus. The protein localises to the cytoplasm. Functionally, glucose-responsive transcription factor that regulates expression of several glucose transporter (HXT) genes in response to glucose. In the absence of glucose, it functions as a transcriptional repressor, whereas high concentrations of glucose cause it to function as a transcriptional activator. In cells growing on low levels of glucose, has a neutral role, neither repressing nor activating transcription. Binds the consensus binding site sequence 5'-CGGANNA-3', of which multiple copies are present in all HXT promoters regulated by RGT1. The protein is Glucose transport transcription regulator RGT1 (RGT1) of Saccharomyces cerevisiae (strain RM11-1a) (Baker's yeast).